A 231-amino-acid polypeptide reads, in one-letter code: Ribosomal RNA large subunit methyltransferase E (231 aa).

The S-adenosyl-L-methionine site is built by G76, W78, D99, D115, and D139. Residue K179 is the Proton acceptor of the active site.

This sequence belongs to the class I-like SAM-binding methyltransferase superfamily. RNA methyltransferase RlmE family.

The protein localises to the cytoplasm. It catalyses the reaction uridine(2552) in 23S rRNA + S-adenosyl-L-methionine = 2'-O-methyluridine(2552) in 23S rRNA + S-adenosyl-L-homocysteine + H(+). In terms of biological role, specifically methylates the uridine in position 2552 of 23S rRNA at the 2'-O position of the ribose in the fully assembled 50S ribosomal subunit. This Bradyrhizobium sp. (strain ORS 278) protein is Ribosomal RNA large subunit methyltransferase E.